We begin with the raw amino-acid sequence, 162 residues long: Phosphopantetheine adenylyltransferase (162 aa).

Residue serine 9 participates in substrate binding. Residues serine 9–phenylalanine 10 and histidine 17 contribute to the ATP site. Residues lysine 41, leucine 73, and lysine 87 each coordinate substrate. ATP is bound by residues glycine 88 to arginine 90, glutamate 98, and cysteine 123 to serine 129.

It belongs to the bacterial CoaD family. In terms of assembly, homohexamer. It depends on Mg(2+) as a cofactor.

The protein localises to the cytoplasm. The enzyme catalyses (R)-4'-phosphopantetheine + ATP + H(+) = 3'-dephospho-CoA + diphosphate. It participates in cofactor biosynthesis; coenzyme A biosynthesis; CoA from (R)-pantothenate: step 4/5. Functionally, reversibly transfers an adenylyl group from ATP to 4'-phosphopantetheine, yielding dephospho-CoA (dPCoA) and pyrophosphate. The polypeptide is Phosphopantetheine adenylyltransferase (Natranaerobius thermophilus (strain ATCC BAA-1301 / DSM 18059 / JW/NM-WN-LF)).